Consider the following 206-residue polypeptide: Small ribosomal subunit protein uS4 (206 aa).

The S4 RNA-binding domain maps to 98 to 161 (RRLDNVVYRL…RSMELIKNNL (64 aa)).

The protein belongs to the universal ribosomal protein uS4 family. In terms of assembly, part of the 30S ribosomal subunit. Contacts protein S5. The interaction surface between S4 and S5 is involved in control of translational fidelity.

Its function is as follows. One of the primary rRNA binding proteins, it binds directly to 16S rRNA where it nucleates assembly of the body of the 30S subunit. With S5 and S12 plays an important role in translational accuracy. In Caldanaerobacter subterraneus subsp. tengcongensis (strain DSM 15242 / JCM 11007 / NBRC 100824 / MB4) (Thermoanaerobacter tengcongensis), this protein is Small ribosomal subunit protein uS4.